We begin with the raw amino-acid sequence, 104 residues long: Large ribosomal subunit protein uL24 (104 aa).

The protein belongs to the universal ribosomal protein uL24 family. Part of the 50S ribosomal subunit.

One of two assembly initiator proteins, it binds directly to the 5'-end of the 23S rRNA, where it nucleates assembly of the 50S subunit. Functionally, one of the proteins that surrounds the polypeptide exit tunnel on the outside of the subunit. This is Large ribosomal subunit protein uL24 from Herminiimonas arsenicoxydans.